The primary structure comprises 734 residues: Phosphoribosylformylglycinamidine synthase subunit PurL (734 aa).

Residue His49 is part of the active site. Positions 52 and 91 each coordinate ATP. Glu93 is a Mg(2+) binding site. Substrate-binding positions include 94–97 and Arg116; that span reads SHNH. Catalysis depends on His95, which acts as the Proton acceptor. Asp117 serves as a coordination point for Mg(2+). Gln240 contributes to the substrate binding site. Residue Asp268 participates in Mg(2+) binding. 312 to 314 is a binding site for substrate; the sequence is ESQ. Asp491 and Gly528 together coordinate ATP. Asn529 is a Mg(2+) binding site. Ser531 is a substrate binding site.

This sequence belongs to the FGAMS family. In terms of assembly, monomer. Part of the FGAM synthase complex composed of 1 PurL, 1 PurQ and 2 PurS subunits.

It is found in the cytoplasm. It carries out the reaction N(2)-formyl-N(1)-(5-phospho-beta-D-ribosyl)glycinamide + L-glutamine + ATP + H2O = 2-formamido-N(1)-(5-O-phospho-beta-D-ribosyl)acetamidine + L-glutamate + ADP + phosphate + H(+). It participates in purine metabolism; IMP biosynthesis via de novo pathway; 5-amino-1-(5-phospho-D-ribosyl)imidazole from N(2)-formyl-N(1)-(5-phospho-D-ribosyl)glycinamide: step 1/2. In terms of biological role, part of the phosphoribosylformylglycinamidine synthase complex involved in the purines biosynthetic pathway. Catalyzes the ATP-dependent conversion of formylglycinamide ribonucleotide (FGAR) and glutamine to yield formylglycinamidine ribonucleotide (FGAM) and glutamate. The FGAM synthase complex is composed of three subunits. PurQ produces an ammonia molecule by converting glutamine to glutamate. PurL transfers the ammonia molecule to FGAR to form FGAM in an ATP-dependent manner. PurS interacts with PurQ and PurL and is thought to assist in the transfer of the ammonia molecule from PurQ to PurL. The chain is Phosphoribosylformylglycinamidine synthase subunit PurL from Zymomonas mobilis subsp. mobilis (strain ATCC 31821 / ZM4 / CP4).